We begin with the raw amino-acid sequence, 348 residues long: NADH-ubiquinone oxidoreductase chain 2 (348 aa).

Transmembrane regions (helical) follow at residues 13-33 (VGLG…WMGL), 60-80 (FLTQ…NAWM), 93-113 (IAST…PMHF), 149-169 (IDPL…GWGG), 178-197 (ILAY…IQYA), 202-219 (LIAL…FLTL), 246-266 (LVLL…KWLI), 274-294 (DLPI…YFYL), and 326-346 (LALF…ILML).

The protein belongs to the complex I subunit 2 family.

It localises to the mitochondrion inner membrane. It catalyses the reaction a ubiquinone + NADH + 5 H(+)(in) = a ubiquinol + NAD(+) + 4 H(+)(out). Functionally, core subunit of the mitochondrial membrane respiratory chain NADH dehydrogenase (Complex I) that is believed to belong to the minimal assembly required for catalysis. Complex I functions in the transfer of electrons from NADH to the respiratory chain. The immediate electron acceptor for the enzyme is believed to be ubiquinone. This chain is NADH-ubiquinone oxidoreductase chain 2 (MT-ND2), found in Cyprinus carpio (Common carp).